Consider the following 71-residue polypeptide: Sec-independent protein translocase protein TatA (71 aa).

The chain crosses the membrane as a helical span at residues 1-21 (MGSFSLLHWLVVLVIVLLVFG). Residues 43 to 71 (LREDDKPTDQLGSTSQSTASGPQQDHGKH) are disordered. The span at 52–65 (QLGSTSQSTASGPQ) shows a compositional bias: polar residues.

The protein belongs to the TatA/E family. As to quaternary structure, the Tat system comprises two distinct complexes: a TatABC complex, containing multiple copies of TatA, TatB and TatC subunits, and a separate TatA complex, containing only TatA subunits. Substrates initially bind to the TatABC complex, which probably triggers association of the separate TatA complex to form the active translocon.

It is found in the cell inner membrane. Its function is as follows. Part of the twin-arginine translocation (Tat) system that transports large folded proteins containing a characteristic twin-arginine motif in their signal peptide across membranes. TatA could form the protein-conducting channel of the Tat system. This chain is Sec-independent protein translocase protein TatA, found in Xylella fastidiosa (strain 9a5c).